Reading from the N-terminus, the 178-residue chain is Cytochrome b6-f complex iron-sulfur subunit (178 aa).

Residues leucine 20–methionine 42 traverse the membrane as a helical segment. One can recognise a Rieske domain in the interval asparagine 71–valine 161. The [2Fe-2S] cluster site is built by cysteine 107, histidine 109, cysteine 125, and histidine 128. Cysteine 112 and cysteine 127 are joined by a disulfide.

This sequence belongs to the Rieske iron-sulfur protein family. In terms of assembly, the 4 large subunits of the cytochrome b6-f complex are cytochrome b6, subunit IV (17 kDa polypeptide, PetD), cytochrome f and the Rieske protein, while the 4 small subunits are PetG, PetL, PetM and PetN. The complex functions as a dimer. Requires [2Fe-2S] cluster as cofactor.

The protein resides in the cellular thylakoid membrane. The enzyme catalyses 2 oxidized [plastocyanin] + a plastoquinol + 2 H(+)(in) = 2 reduced [plastocyanin] + a plastoquinone + 4 H(+)(out). Its function is as follows. Component of the cytochrome b6-f complex, which mediates electron transfer between photosystem II (PSII) and photosystem I (PSI), cyclic electron flow around PSI, and state transitions. This is Cytochrome b6-f complex iron-sulfur subunit from Prochlorococcus marinus (strain SARG / CCMP1375 / SS120).